Reading from the N-terminus, the 658-residue chain is Glycogen debranching enzyme (658 aa).

Residue Asp335 is the Nucleophile of the active site. Glu370 acts as the Proton donor in catalysis. Positions 457–468 (NDANGEGNRDGT) are enriched in basic and acidic residues. Residues 457 to 481 (NDANGEGNRDGTDSNFSNNHGTEGL) are disordered.

It belongs to the glycosyl hydrolase 13 family.

It catalyses the reaction Hydrolysis of (1-&gt;6)-alpha-D-glucosidic linkages to branches with degrees of polymerization of three or four glucose residues in limit dextrin.. The protein operates within glycan degradation; glycogen degradation. Removes maltotriose and maltotetraose chains that are attached by 1,6-alpha-linkage to the limit dextrin main chain, generating a debranched limit dextrin. This is Glycogen debranching enzyme from Pectobacterium atrosepticum (strain SCRI 1043 / ATCC BAA-672) (Erwinia carotovora subsp. atroseptica).